Consider the following 355-residue polypeptide: 45 kDa calcium-binding protein (355 aa).

The first 29 residues, 1-29 (MASRQAPLCGLAPCCLWLLGVVLLMNASA), serve as a signal peptide directing secretion. A glycan (N-linked (GlcNAc...) asparagine) is linked at N33. EF-hand domains are found at residues 91-126 (KSRRKLMVIFSKVDLNTDRRISAKEMQKWIMQKTAE) and 130-165 (EAVAESRAHFRAVDPDGDGHVSWDEYKVKFLATKGH). Phosphoserine is present on S92. Residues D104, N106, D108, R110, E115, D143, D145, D147, H149, and E154 each contribute to the Ca(2+) site. Phosphothreonine is present on residues T186 and T210. 3 consecutive EF-hand domains span residues 226-261 (MLQFMVKEIIRDLDQDGDKKLSLSEFISLPVGTVEN), 271-306 (WVRDRKREFEELIDANHDGIVTMAELEDYMDPMNEF), and 307-342 (SALNEAKQMIAIADENQNHYLEPEEVLKYSEFFTGS). Positions 239, 241, 243, 245, and 250 each coordinate Ca(2+). Phosphothreonine is present on T258. Ca(2+)-binding residues include D284, N286, and D288. T292 is subject to Phosphothreonine. 6 residues coordinate Ca(2+): E295, D320, N322, N324, Y326, and E331. Residues 302–355 (PMNEFSALNEAKQMIAIADENQNHYLEPEEVLKYSEFFTGSKLVDYARSVHEEF) are necessary for intracellular retention in Golgi apparatus lumen.

Belongs to the CREC family.

Its subcellular location is the golgi apparatus lumen. May regulate calcium-dependent activities in the endoplasmic reticulum lumen or post-ER compartment. The polypeptide is 45 kDa calcium-binding protein (SDF4) (Bos taurus (Bovine)).